A 253-amino-acid chain; its full sequence is Triosephosphate isomerase (253 aa).

9 to 11 (NWK) contacts substrate. The Electrophile role is filled by histidine 96. The active-site Proton acceptor is glutamate 168. Substrate contacts are provided by residues glycine 174, serine 213, and 234–235 (GG).

Belongs to the triosephosphate isomerase family. As to quaternary structure, homodimer.

The protein resides in the cytoplasm. The catalysed reaction is D-glyceraldehyde 3-phosphate = dihydroxyacetone phosphate. It participates in carbohydrate biosynthesis; gluconeogenesis. It functions in the pathway carbohydrate degradation; glycolysis; D-glyceraldehyde 3-phosphate from glycerone phosphate: step 1/1. Involved in the gluconeogenesis. Catalyzes stereospecifically the conversion of dihydroxyacetone phosphate (DHAP) to D-glyceraldehyde-3-phosphate (G3P). The polypeptide is Triosephosphate isomerase (Hydrogenovibrio crunogenus (strain DSM 25203 / XCL-2) (Thiomicrospira crunogena)).